The primary structure comprises 329 residues: 31 kDa immunogenic protein (329 aa).

The signal sequence occupies residues 1–28 (MKFGSKIRRLAVAAVAGAIALGASFAVA).

The chain is 31 kDa immunogenic protein (bcsP31) from Brucella abortus biovar 1 (strain 9-941).